The sequence spans 64 residues: Large ribosomal subunit protein bL32 (64 aa).

Over residues Met-1–Arg-16 the composition is skewed to basic residues. The segment at Met-1–Glu-64 is disordered.

Belongs to the bacterial ribosomal protein bL32 family.

This chain is Large ribosomal subunit protein bL32, found in Coxiella burnetii (strain CbuK_Q154) (Coxiella burnetii (strain Q154)).